The following is a 333-amino-acid chain: UDP-N-acetylenolpyruvoylglucosamine reductase (333 aa).

In terms of domain architecture, FAD-binding PCMH-type spans 12–176 (LPAQCRALIE…TSVVFRLPKD (165 aa)). The active site involves Arg-153. Catalysis depends on Ser-221, which acts as the Proton donor. The active site involves Glu-317.

This sequence belongs to the MurB family. It depends on FAD as a cofactor.

It localises to the cytoplasm. The enzyme catalyses UDP-N-acetyl-alpha-D-muramate + NADP(+) = UDP-N-acetyl-3-O-(1-carboxyvinyl)-alpha-D-glucosamine + NADPH + H(+). The protein operates within cell wall biogenesis; peptidoglycan biosynthesis. In terms of biological role, cell wall formation. The polypeptide is UDP-N-acetylenolpyruvoylglucosamine reductase (Idiomarina loihiensis (strain ATCC BAA-735 / DSM 15497 / L2-TR)).